The chain runs to 300 residues: Enoyl-CoA hydratase domain-containing protein 3, mitochondrial (300 aa).

The transit peptide at 1–66 directs the protein to the mitochondrion; sequence MALVAGLRAF…RNIVLSNPRR (66 aa). The tract at residues 32-54 is disordered; it reads SPGSARPAGPESEPRLTSTRQQD. N6-succinyllysine is present on Lys110.

The protein belongs to the enoyl-CoA hydratase/isomerase family.

Its subcellular location is the mitochondrion. Functionally, may play a role in fatty acid biosynthesis and insulin sensitivity. The polypeptide is Enoyl-CoA hydratase domain-containing protein 3, mitochondrial (Rattus norvegicus (Rat)).